The following is a 554-amino-acid chain: MPQLNSGGGDELGANDELIRFKDEGEQEEKSPGEGSAEGDLADVKSSLVNESENHSSDSDSEVERRPPPREAFEKHRDYLTEALRRQQDAAFFKGPPYAGYPFLMIPDLGGHYLPNGALSPSARTYLQMKWPLLDSPSTAGLKDARSPSPAHLSNKVPVVQHPHHMHPLTPLITYSNEHFSPGTPPGHLSPEIDPKTGIPRPPHPSELSPYYPLSPGAVGQIPHPLGWLVPPQGQPMYSIPPGGFRHPYPALAMNASMSSLVSSRFSPHMVPPPHHSLHTSGIPHPAIVSPIVKQEPSSGNISPNLHTKSNMIVKKEEEKKPHIKKPLNAFMLYMKEMRAKVVAECTLKESAAINQILGRRWHSLSREEQAKYYELARKERQLHSQLYPSWSARDNYGKRKKRKREKQSPEMETHTKTKKMCVQHLPADKSCDSPASSHGSMLDSPATPSAALASPAAPAATHSEQAQPLSLTTKPEARAQLSLSHSAAFLASKSPSSSSFSGHLSSPVGSPLLSRPIPLTSSILSPSGVFPSALQALPLLQAQPLSLVTKSSD.

Positions M1–E11 are enriched in gly residues. The interval M1–S61 is interaction with CTNNB1-A. Disordered stretches follow at residues M1 to F73, G183 to P213, and W391 to K475. Basic and acidic residues-rich tracts occupy residues E17–P32 and S52–F73. Residues L109–M312 form an interaction with AES and TLE4-A region. Residues I324–S392 constitute a DNA-binding region (HMG box). Residues K407–T416 are compositionally biased toward basic and acidic residues. The segment at Q408 to D554 is interaction with CTBP-B. The span at S445 to S464 shows a compositional bias: low complexity. The segment covering E465–T474 has biased composition (polar residues).

Belongs to the TCF/LEF family. Interacts with csnk1e, ctnnb1-A, ctbp-B, dact1-A and gsk3b. May interact with ase and tle4-A. Post-translationally, phosphorylated. Phosphorylation by csnk1e promotes binding to ctnnb1-A while phosphorylation by gsk3b may reverse this effect.

The protein resides in the cytoplasm. It localises to the nucleus. Functionally, participates in the Wnt signaling pathway. Binds to DNA and acts as a repressor in the absence of ctnnb1-A and possibly ctnnb1-B, and as an activator in the presence of these proteins. Required early in development for the establishment of the dorsal body axis in response to maternal Wnt signaling. Also required during development of the CNS for the establishment of dorsal-ventral patterning in the prospective diencephalon. In Xenopus laevis (African clawed frog), this protein is Transcription factor 7-like 1-A (tcf7l1-a).